The sequence spans 351 residues: Probable protein phosphatase 2C 41 (351 aa).

Positions 62 to 348 constitute a PPM-type phosphatase domain; it reads FTSICSNRGE…DDISVLCLFF (287 aa). Mn(2+) is bound by residues Asp-98, Gly-99, Asp-293, and Asp-339.

The protein belongs to the PP2C family. Mg(2+) serves as cofactor. The cofactor is Mn(2+).

It catalyses the reaction O-phospho-L-seryl-[protein] + H2O = L-seryl-[protein] + phosphate. The catalysed reaction is O-phospho-L-threonyl-[protein] + H2O = L-threonyl-[protein] + phosphate. The sequence is that of Probable protein phosphatase 2C 41 from Arabidopsis thaliana (Mouse-ear cress).